A 536-amino-acid polypeptide reads, in one-letter code: Casein kinase I homolog RAG8 (536 aa).

The segment covering histidine 26–serine 42 has biased composition (polar residues). The segment at histidine 26–aspartate 68 is disordered. Over residues glycine 43–serine 65 the composition is skewed to low complexity. Residues tyrosine 77–methionine 361 enclose the Protein kinase domain. ATP-binding positions include isoleucine 83–leucine 91 and lysine 106. Aspartate 196 functions as the Proton acceptor in the catalytic mechanism. 2 stretches are compositionally biased toward polar residues: residues asparagine 407–serine 420 and aspartate 427–proline 436. The disordered stretch occupies residues asparagine 407 to asparagine 524. Composition is skewed to low complexity over residues glutamine 437 to glutamine 453 and alanine 463 to glutamine 514. 2 S-palmitoyl cysteine lipidation sites follow: cysteine 535 and cysteine 536.

It belongs to the protein kinase superfamily. CK1 Ser/Thr protein kinase family. Casein kinase I subfamily.

It carries out the reaction L-seryl-[protein] + ATP = O-phospho-L-seryl-[protein] + ADP + H(+). It catalyses the reaction L-threonyl-[protein] + ATP = O-phospho-L-threonyl-[protein] + ADP + H(+). Functionally, casein kinases are operationally defined by their preferential utilization of acidic proteins such as caseins as substrates. This is Casein kinase I homolog RAG8 (RAG8) from Kluyveromyces lactis (strain ATCC 8585 / CBS 2359 / DSM 70799 / NBRC 1267 / NRRL Y-1140 / WM37) (Yeast).